A 273-amino-acid polypeptide reads, in one-letter code: Dermonecrotic toxin LruSicTox-alphaIC1b (273 aa).

H5 is a catalytic residue. Residues E25 and D27 each coordinate Mg(2+). The Nucleophile role is filled by H41. 2 disulfide bridges follow: C45–C51 and C47–C190. D85 is a binding site for Mg(2+).

The protein belongs to the arthropod phospholipase D family. Class II subfamily. The cofactor is Mg(2+). Expressed by the venom gland.

It is found in the secreted. It carries out the reaction an N-(acyl)-sphingosylphosphocholine = an N-(acyl)-sphingosyl-1,3-cyclic phosphate + choline. The enzyme catalyses an N-(acyl)-sphingosylphosphoethanolamine = an N-(acyl)-sphingosyl-1,3-cyclic phosphate + ethanolamine. The catalysed reaction is a 1-acyl-sn-glycero-3-phosphocholine = a 1-acyl-sn-glycero-2,3-cyclic phosphate + choline. It catalyses the reaction a 1-acyl-sn-glycero-3-phosphoethanolamine = a 1-acyl-sn-glycero-2,3-cyclic phosphate + ethanolamine. Its function is as follows. Dermonecrotic toxins cleave the phosphodiester linkage between the phosphate and headgroup of certain phospholipids (sphingolipid and lysolipid substrates), forming an alcohol (often choline) and a cyclic phosphate. This toxin acts on sphingomyelin (SM). It may also act on ceramide phosphoethanolamine (CPE), lysophosphatidylcholine (LPC) and lysophosphatidylethanolamine (LPE), but not on lysophosphatidylserine (LPS), and lysophosphatidylglycerol (LPG). It acts by transphosphatidylation, releasing exclusively cyclic phosphate products as second products. Induces dermonecrosis, hemolysis, increased vascular permeability, edema, inflammatory response, and platelet aggregation. This Loxosceles rufescens (Mediterranean recluse spider) protein is Dermonecrotic toxin LruSicTox-alphaIC1b.